The chain runs to 465 residues: Probable oxidoreductase AIM17 (465 aa).

The N-terminal 16 residues, Met1–Leu16, are a transit peptide targeting the mitochondrion. Positions 246, 248, and 428 each coordinate Fe cation.

The protein belongs to the gamma-BBH/TMLD family. It depends on Fe(2+) as a cofactor. Requires L-ascorbate as cofactor.

The protein localises to the mitochondrion. This is Probable oxidoreductase AIM17 (AIM17) from Saccharomyces cerevisiae (strain ATCC 204508 / S288c) (Baker's yeast).